The sequence spans 185 residues: Protein GrpE (185 aa).

The span at 1-12 (MADEQLNEKDLN) shows a compositional bias: basic and acidic residues. The disordered stretch occupies residues 1–22 (MADEQLNEKDLNVEETGAGNAA).

The protein belongs to the GrpE family. Homodimer.

It is found in the cytoplasm. Its function is as follows. Participates actively in the response to hyperosmotic and heat shock by preventing the aggregation of stress-denatured proteins, in association with DnaK and GrpE. It is the nucleotide exchange factor for DnaK and may function as a thermosensor. Unfolded proteins bind initially to DnaJ; upon interaction with the DnaJ-bound protein, DnaK hydrolyzes its bound ATP, resulting in the formation of a stable complex. GrpE releases ADP from DnaK; ATP binding to DnaK triggers the release of the substrate protein, thus completing the reaction cycle. Several rounds of ATP-dependent interactions between DnaJ, DnaK and GrpE are required for fully efficient folding. The sequence is that of Protein GrpE from Pseudomonas putida (strain ATCC 700007 / DSM 6899 / JCM 31910 / BCRC 17059 / LMG 24140 / F1).